Reading from the N-terminus, the 467-residue chain is Serine/threonine-protein kinase SSN3 (467 aa).

Composition is skewed to polar residues over residues 1–12 (MSFSNLPPSSGR) and 29–39 (GSSSFTANNPS). The disordered stretch occupies residues 1-45 (MSFSNLPPSSGRGSHADGASGRSMPPFPGSSSFTANNPSKGIHPN). Residues 79-408 (YLIVGFISSG…AKEALNHPYF (330 aa)) enclose the Protein kinase domain. Residues 85 to 93 (ISSGTYGRV) and Lys-109 contribute to the ATP site. Asp-211 serves as the catalytic Proton acceptor. The tract at residues 426 to 467 (YPNRRVSQDDNDIRSGSLPGTKRSGLPDDTLTSRAAKRAREM) is disordered.

The protein belongs to the protein kinase superfamily. CMGC Ser/Thr protein kinase family. CDC2/CDKX subfamily. Component of the SRB8-11 complex, a regulatory module of the Mediator complex. The cofactor is Mg(2+).

The protein resides in the nucleus. It catalyses the reaction L-seryl-[protein] + ATP = O-phospho-L-seryl-[protein] + ADP + H(+). The enzyme catalyses L-threonyl-[protein] + ATP = O-phospho-L-threonyl-[protein] + ADP + H(+). It carries out the reaction [DNA-directed RNA polymerase] + ATP = phospho-[DNA-directed RNA polymerase] + ADP + H(+). Component of the SRB8-11 complex. The SRB8-11 complex is a regulatory module of the Mediator complex which is itself involved in regulation of basal and activated RNA polymerase II-dependent transcription. The SRB8-11 complex may be involved in the transcriptional repression of a subset of genes regulated by Mediator. It may inhibit the association of the Mediator complex with RNA polymerase II to form the holoenzyme complex. The SRB8-11 complex phosphorylates the C-terminal domain (CTD) of the largest subunit of RNA polymerase II. The protein is Serine/threonine-protein kinase SSN3 (SSN3) of Coccidioides immitis (strain RS) (Valley fever fungus).